A 476-amino-acid chain; its full sequence is Aspartyl/glutamyl-tRNA(Asn/Gln) amidotransferase subunit B (476 aa).

It belongs to the GatB/GatE family. GatB subfamily. Heterotrimer of A, B and C subunits.

It carries out the reaction L-glutamyl-tRNA(Gln) + L-glutamine + ATP + H2O = L-glutaminyl-tRNA(Gln) + L-glutamate + ADP + phosphate + H(+). The catalysed reaction is L-aspartyl-tRNA(Asn) + L-glutamine + ATP + H2O = L-asparaginyl-tRNA(Asn) + L-glutamate + ADP + phosphate + 2 H(+). Its function is as follows. Allows the formation of correctly charged Asn-tRNA(Asn) or Gln-tRNA(Gln) through the transamidation of misacylated Asp-tRNA(Asn) or Glu-tRNA(Gln) in organisms which lack either or both of asparaginyl-tRNA or glutaminyl-tRNA synthetases. The reaction takes place in the presence of glutamine and ATP through an activated phospho-Asp-tRNA(Asn) or phospho-Glu-tRNA(Gln). This chain is Aspartyl/glutamyl-tRNA(Asn/Gln) amidotransferase subunit B, found in Oceanobacillus iheyensis (strain DSM 14371 / CIP 107618 / JCM 11309 / KCTC 3954 / HTE831).